We begin with the raw amino-acid sequence, 57 residues long: Toxin GhoT (57 aa).

Transmembrane regions (helical) follow at residues Ile7–His27 and Ala37–Phe57.

The protein belongs to the GhoT/OrtT toxin family.

It is found in the cell inner membrane. Its function is as follows. Toxic component of a type V toxin-antitoxin (TA) system. Causes membrane damage when induced by MqsR, slowing cell growth and leading to the formation of dormant persister cells; involved with GhoS, its antitoxin, in reducing cell growth during antibacterial stress. Its toxic effects are neutralized by GhoS, which digests ghoT transcripts in a sequence-specific manner. In Escherichia coli O157:H7, this protein is Toxin GhoT.